We begin with the raw amino-acid sequence, 202 residues long: Large ribosomal subunit protein bL25 (202 aa).

This sequence belongs to the bacterial ribosomal protein bL25 family. CTC subfamily. Part of the 50S ribosomal subunit; part of the 5S rRNA/L5/L18/L25 subcomplex. Contacts the 5S rRNA. Binds to the 5S rRNA independently of L5 and L18.

This is one of the proteins that binds to the 5S RNA in the ribosome where it forms part of the central protuberance. The protein is Large ribosomal subunit protein bL25 of Chlorobium luteolum (strain DSM 273 / BCRC 81028 / 2530) (Pelodictyon luteolum).